The sequence spans 200 residues: NAD(P)H dehydrogenase (quinone) (200 aa).

The Flavodoxin-like domain maps to 4-191 (VLVLYYSSYG…DIARYQGKHV (188 aa)). Residues 10 to 15 (SSYGHV) and 79 to 81 (TRF) each bind FMN. An NAD(+)-binding site is contributed by Y12. Residue W99 participates in substrate binding. FMN-binding positions include 114 to 120 (STGTQHG) and H135.

It belongs to the WrbA family. Requires FMN as cofactor.

The catalysed reaction is a quinone + NADH + H(+) = a quinol + NAD(+). The enzyme catalyses a quinone + NADPH + H(+) = a quinol + NADP(+). The protein is NAD(P)H dehydrogenase (quinone) of Burkholderia ambifaria (strain MC40-6).